A 209-amino-acid chain; its full sequence is C-type lectin domain family 6 member A (209 aa).

Over 1 to 20 the chain is Cytoplasmic; that stretch reads MVQERHPQRKGVCWTLRLWS. Residues 21–43 traverse the membrane as a helical; Signal-anchor for type II membrane protein segment; sequence TAVISMLLLSTCFIASCMVTYQF. The Extracellular portion of the chain corresponds to 44 to 209; it reads TMEKPNRRLS…SICETKKIYL (166 aa). Disulfide bonds link Cys-64/Cys-78 and Cys-79/Cys-90. Residues 86-203 enclose the C-type lectin domain; it reads FGSSCYLIST…CDSKHNSICE (118 aa). Ca(2+) contacts are provided by Val-116, Asn-118, and Glu-122. N-linked (GlcNAc...) asparagine glycosylation is present at Asn-131. Positions 168, 170, and 174 each coordinate Ca(2+). Residues 168–170, Glu-174, Trp-182, and 190–191 each bind alpha-D-mannopyranose; these read EPN and ND. Cysteines 176 and 194 form a disulfide. Residues Asn-190, Asp-191, and Glu-203 each contribute to the Ca(2+) site.

As to quaternary structure, associated with FCER1G. Heterodimer with CLEC4D; this heterodimer forms a pattern recognition receptor (PRR) against fungal infection.

It is found in the cell membrane. Its function is as follows. Calcium-dependent lectin that acts as a pattern recognition receptor (PRR) of the innate immune system: specifically recognizes and binds alpha-mannans on C.albicans hypheas. Binding of C.albicans alpha-mannans to this receptor complex leads to phosphorylation of the immunoreceptor tyrosine-based activation motif (ITAM) of FCER1G, triggering activation of SYK, CARD9 and NF-kappa-B, consequently driving maturation of antigen-presenting cells and shaping antigen-specific priming of T-cells toward effector T-helper 1 and T-helper 17 cell subtypes. Also recognizes, in a mannose-dependent manner, allergens from house dust mite and fungi, by promoting cysteinyl leukotriene production. Recognizes soluble elements from the eggs of Shistosoma mansoni altering adaptive immune responses. In Rattus norvegicus (Rat), this protein is C-type lectin domain family 6 member A (CLEC6A).